The primary structure comprises 156 residues: NPFLTSSVVNTGSSISAKTQDGIGNYAFNYGTANNARAEIGDAAGNKQGSYTITDVDGRARRVDYVADAAGFRASVKTNEPGTALSAPASAAIVSPYAPPVAPVAPAVAAPALAAAPLLAAPGIASYSTLIGHGAPLGYPLGAGLLAPGFAKTYVW.

In terms of domain architecture, Chitin-binding type R&amp;R spans 23–84; sequence IGNYAFNYGT…SVKTNEPGTA (62 aa).

In terms of biological role, component of the rigid cuticle of the spider. This is Adult-specific rigid cuticular protein 15.5 from Araneus diadematus (European garden spider).